Reading from the N-terminus, the 189-residue chain is Potassium-transporting ATPase KdpC subunit (189 aa).

The chain crosses the membrane as a helical span at residues 10–30 (ITLVFCVFFSVFYILILWLFA).

Belongs to the KdpC family. As to quaternary structure, the system is composed of three essential subunits: KdpA, KdpB and KdpC.

It localises to the cell inner membrane. In terms of biological role, part of the high-affinity ATP-driven potassium transport (or Kdp) system, which catalyzes the hydrolysis of ATP coupled with the electrogenic transport of potassium into the cytoplasm. This subunit acts as a catalytic chaperone that increases the ATP-binding affinity of the ATP-hydrolyzing subunit KdpB by the formation of a transient KdpB/KdpC/ATP ternary complex. The polypeptide is Potassium-transporting ATPase KdpC subunit (Bacteroides thetaiotaomicron (strain ATCC 29148 / DSM 2079 / JCM 5827 / CCUG 10774 / NCTC 10582 / VPI-5482 / E50)).